Here is a 218-residue protein sequence, read N- to C-terminus: Ras-related protein Rab-4A (218 aa).

GTP-binding residues include Gly23, Thr24, Gly25, Lys26, Ser27, Cys28, Ser42, His44, and Thr45. Residue Ser27 participates in Mg(2+) binding. The short motif at 44–49 (HTIGVE) is the Switch 1 element. The Mg(2+) site is built by Thr45 and Asp68. The short motif at 70–79 (AGQERFRSVT) is the Switch 2 element. Residue Gly71 coordinates GTP. 5-glutamyl serotonin is present on Gln72. Asn126, Lys127, Asp129, Ala157, and Leu158 together coordinate GTP. Phosphoserine is present on Ser190. A Phosphoserine; by CDK1 modification is found at Ser204. Residues Cys216 and Cys218 are each lipidated (S-geranylgeranyl cysteine). The residue at position 218 (Cys218) is a Cysteine methyl ester.

Belongs to the small GTPase superfamily. Rab family. As to quaternary structure, interacts with RAB11FIP1, RABEP1, ZFYVE20 and RUFY1. Interacts with SGSM1, SGSM2 and SGSM3. Interacts (membrane-bound form) with NDRG1; the interaction involves NDRG1 in vesicular recycling of E-cadherin. Interacts (in GTP-bound form) with GRIPAP1. Interacts with RABEP1 and RBSN. Does not interact with HPS4. Mg(2+) is required as a cofactor. Serotonylation of Gln-72 by TGM2 during activation and aggregation of platelets leads to constitutive activation of GTPase activity. Post-translationally, phosphorylated by CDK1 kinase during mitosis.

It localises to the membrane. It is found in the cytoplasm. The protein resides in the early endosome membrane. Its subcellular location is the recycling endosome membrane. It catalyses the reaction GTP + H2O = GDP + phosphate + H(+). With respect to regulation, regulated by guanine nucleotide exchange factors (GEFs) which promote the exchange of bound GDP for free GTP. Regulated by GTPase activating proteins (GAPs) which increase the GTP hydrolysis activity. Inhibited by GDP dissociation inhibitors (GDIs). Functionally, the small GTPases Rab are key regulators of intracellular membrane trafficking, from the formation of transport vesicles to their fusion with membranes. Rabs cycle between an inactive GDP-bound form and an active GTP-bound form that is able to recruit to membranes different sets of downstream effectors directly responsible for vesicle formation, movement, tethering and fusion. RAB4A is involved in protein transport. Also plays a role in vesicular traffic. Mediates VEGFR2 endosomal trafficking to enhance VEGFR2 signaling. Acts as a regulator of platelet alpha-granule release during activation and aggregation of platelets. This chain is Ras-related protein Rab-4A (RAB4A), found in Bos taurus (Bovine).